We begin with the raw amino-acid sequence, 228 residues long: Chaperone protein FanE (228 aa).

The signal sequence occupies residues 1-19; it reads MNKFISIIALCVFSSYANA. Cys-157 and Cys-198 are joined by a disulfide.

Belongs to the periplasmic pilus chaperone family.

The protein resides in the periplasm. Mediates assembly of pili by forming soluble multimeric complexes with pili subunits as an intermediate step in the assembly process. This protein is involved in K99 pili assembly. In Escherichia coli, this protein is Chaperone protein FanE (fanE).